The sequence spans 475 residues: MATGSLRGLAVAGGGESSDSEDDGWEIGYLDRPPQKLKGPLPIEEKNETFKKALTTGDTSLVKELLDSGISVDSSFRYGWTPLMYAASVANVELVRVLLDRGANASFDKDKQTILITACSARGSEEQILKCVELLLSRNADPNVACRRLMTPIMYAARDGHPQVVALLVAHGAEVNIQDENGYTALTWAARQGHKSVVLKLLELGANKTLQTKDGKTPSEIAKRNKHLEIFNLLSLTLNPLEGKLQQLTKEETICKLLTTDSDKEKDHIFSSYTAFGDLEIFLHGLGLEHMTDLLKERDITLRHLLTMRKDEFTQNGITSKDQQKILAALKELEVEEIKFGELPEVAKLEISGDEFLNFLLKLNKQCGHLITAVQNIITELPVNSHKIVLEWASPRNFTSVCEELVSNVEDLNEEVCKLKDLIQKLQNERENDPTHIPLMEEVSTWNSKILKRTAVTVCGFGFLLFICKLTFQRK.

Residues 1 to 38 (MATGSLRGLAVAGGGESSDSEDDGWEIGYLDRPPQKLK) are disordered. Phosphoserine occurs at positions 17, 18, and 20. ANK repeat units follow at residues 45-74 (EKNE…SVDS), 78-107 (YGWT…NASF), 110-144 (DKQT…DPNV), 148-177 (RLMT…EVNI), 181-210 (NGYT…NKTL), and 214-243 (DGKT…PLEG). The SAM domain occupies 272-334 (SYTAFGDLEI…KILAALKELE (63 aa)).

Interacts with DDX4, PIWIL1, RANBP9 and TDRD1.

The protein resides in the cytoplasm. Its function is as follows. Plays a central role during spermatogenesis by repressing transposable elements and preventing their mobilization, which is essential for the germline integrity. Acts via the piRNA metabolic process, which mediates the repression of transposable elements during meiosis by forming complexes composed of piRNAs and Piwi proteins and governs the methylation and subsequent repression of transposons. Its association with pi-bodies suggests a participation in the primary piRNAs metabolic process. Required prior to the pachytene stage to facilitate the production of multiple types of piRNAs, including those associated with repeats involved in the regulation of retrotransposons. May act by mediating protein-protein interactions during germ cell maturation. In Oryctolagus cuniculus (Rabbit), this protein is Ankyrin repeat, SAM and basic leucine zipper domain-containing protein 1 (ASZ1).